The following is a 337-amino-acid chain: Tetraacyldisaccharide 4'-kinase (337 aa).

51–58 serves as a coordination point for ATP; it reads HLGGAGKT.

The protein belongs to the LpxK family.

The catalysed reaction is a lipid A disaccharide + ATP = a lipid IVA + ADP + H(+). It functions in the pathway glycolipid biosynthesis; lipid IV(A) biosynthesis; lipid IV(A) from (3R)-3-hydroxytetradecanoyl-[acyl-carrier-protein] and UDP-N-acetyl-alpha-D-glucosamine: step 6/6. Functionally, transfers the gamma-phosphate of ATP to the 4'-position of a tetraacyldisaccharide 1-phosphate intermediate (termed DS-1-P) to form tetraacyldisaccharide 1,4'-bis-phosphate (lipid IVA). The sequence is that of Tetraacyldisaccharide 4'-kinase from Nitrobacter winogradskyi (strain ATCC 25391 / DSM 10237 / CIP 104748 / NCIMB 11846 / Nb-255).